Reading from the N-terminus, the 306-residue chain is Triplex capsid protein 2 (306 aa).

Belongs to the herpesviridae TRX2 protein family. Interacts with TRX1 and major capisd protein/MCP.

The protein localises to the virion. Its subcellular location is the host nucleus. Structural component of the T=16 icosahedral capsid. The capsid is composed of pentamers and hexamers of major capsid protein/MCP, which are linked together by heterotrimers called triplexes. These triplexes are formed by a single molecule of triplex protein 1/TRX1 and two copies of triplex protein 2/TRX2. Additionally, TRX1 is required for efficient transport of TRX2 to the nucleus, which is the site of capsid assembly. The polypeptide is Triplex capsid protein 2 (Human cytomegalovirus (strain AD169) (HHV-5)).